The primary structure comprises 171 residues: Protein GrpE (171 aa).

Positions 1-20 (MNEEKEESPSTEAEGAGAEV) are disordered.

This sequence belongs to the GrpE family. In terms of assembly, homodimer.

It is found in the cytoplasm. Functionally, participates actively in the response to hyperosmotic and heat shock by preventing the aggregation of stress-denatured proteins, in association with DnaK and GrpE. It is the nucleotide exchange factor for DnaK and may function as a thermosensor. Unfolded proteins bind initially to DnaJ; upon interaction with the DnaJ-bound protein, DnaK hydrolyzes its bound ATP, resulting in the formation of a stable complex. GrpE releases ADP from DnaK; ATP binding to DnaK triggers the release of the substrate protein, thus completing the reaction cycle. Several rounds of ATP-dependent interactions between DnaJ, DnaK and GrpE are required for fully efficient folding. The sequence is that of Protein GrpE from Acidithiobacillus ferrooxidans (strain ATCC 23270 / DSM 14882 / CIP 104768 / NCIMB 8455) (Ferrobacillus ferrooxidans (strain ATCC 23270)).